A 60-amino-acid chain; its full sequence is Large ribosomal subunit protein uL30 (60 aa).

It belongs to the universal ribosomal protein uL30 family. As to quaternary structure, part of the 50S ribosomal subunit.

In Paraburkholderia phytofirmans (strain DSM 17436 / LMG 22146 / PsJN) (Burkholderia phytofirmans), this protein is Large ribosomal subunit protein uL30.